We begin with the raw amino-acid sequence, 118 residues long: Large ribosomal subunit protein uL24 (118 aa).

Belongs to the universal ribosomal protein uL24 family. Part of the 50S ribosomal subunit.

One of two assembly initiator proteins, it binds directly to the 5'-end of the 23S rRNA, where it nucleates assembly of the 50S subunit. Its function is as follows. One of the proteins that surrounds the polypeptide exit tunnel on the outside of the subunit. This chain is Large ribosomal subunit protein uL24, found in Prochlorococcus marinus (strain SARG / CCMP1375 / SS120).